A 144-amino-acid polypeptide reads, in one-letter code: Superoxide dismutase [Mn], mitochondrial (144 aa).

Positions 10, 58, and 143 each coordinate Mn(2+).

Belongs to the iron/manganese superoxide dismutase family. As to quaternary structure, homotetramer. The cofactor is Mn(2+).

It localises to the mitochondrion matrix. The catalysed reaction is 2 superoxide + 2 H(+) = H2O2 + O2. Destroys superoxide anion radicals which are normally produced within the cells and which are toxic to biological systems. This chain is Superoxide dismutase [Mn], mitochondrial, found in Branchiostoma floridae (Florida lancelet).